Here is an 871-residue protein sequence, read N- to C-terminus: Coatomer subunit gamma-2 (871 aa).

Residues 1–11 show a composition bias toward basic and acidic residues; that stretch reads MIKKFDKKDEE. Residues 1–20 are disordered; sequence MIKKFDKKDEESGSGSNPFR. HEAT repeat units follow at residues 64–101, 283–320, 321–355, 356–392, 395–430, and 467–504; these read TEAT…ISED, RELA…KHPS, AVTA…GSES, SVDR…KYPR, SVMM…ENPE, and PVPS…QNEN. T594 carries the post-translational modification Phosphothreonine.

Belongs to the COPG family. In terms of assembly, oligomeric complex. Binds to CDC42. Interacts with JAGN1. Interacts with TMED10 (via cytoplasmic domain).

The protein resides in the cytoplasm. Its subcellular location is the cytosol. It is found in the golgi apparatus membrane. The protein localises to the cytoplasmic vesicle. It localises to the COPI-coated vesicle membrane. The coatomer is a cytosolic protein complex that binds to dilysine motifs and reversibly associates with Golgi non-clathrin-coated vesicles, which further mediate biosynthetic protein transport from the ER, via the Golgi up to the trans Golgi network. Coatomer complex is required for budding from Golgi membranes, and is essential for the retrograde Golgi-to-ER transport of dilysine-tagged proteins. In mammals, the coatomer can only be recruited by membranes associated to ADP-ribosylation factors (ARFs), which are small GTP-binding proteins; the complex also influences the Golgi structural integrity, as well as the processing, activity, and endocytic recycling of LDL receptors. This chain is Coatomer subunit gamma-2 (COPG2), found in Bos taurus (Bovine).